The sequence spans 135 residues: Transcriptional activator protein (135 aa).

Residues 17 to 32 (KIQHHIAKKRQVRRRR) carry the Nuclear localization signal motif. A zinc finger lies at 37-54 (CGCSYYIHLDCINHGFTH). The tract at residues 120 to 135 (HLDDLTVSDWSFFKSL) is transactivation.

Belongs to the geminiviridae transcriptional activator protein family. In terms of assembly, monomer. Homodimer. Homooligomer. Self-interaction correlates with nuclear localization and efficient activation of transcription. Monomers suppress local silencing by interacting with and inactivating host adenosine kinase 2 (ADK2) in the cytoplasm. Interacts with and inhibits host SNF1 kinase. Binds to ssDNA. May interact with host RPS27A. Phosphorylated.

The protein resides in the host nucleus. It localises to the host cytoplasm. Its function is as follows. Multifunctional protein that modulates host antiviral defenses and promotes host attractiveness to insect vectors. Acts as a suppressor of RNA-mediated gene silencing, also known as post-transcriptional gene silencing (PTGS), a mechanism of plant viral defense that limits the accumulation of viral RNAs. TrAP suppresses the host RNA silencing by inhibiting adenosine kinase 2 (ADK2), a kinase involved in a general methylation pathway. Also suppresses the host basal defense by interacting with and inhibiting SNF1 kinase, a key regulator of cell metabolism implicated in innate antiviral defense. Functionally, inhibits signal transduction by the phytohormone jasmonate, making the infected plant more attractive to aphids, which are the second host to play a role as a dissemination vector. Acts by binding to ubiquitin precursor RPS27A, thereby preventing ubiquitin degradation of JAZ. This Tomato yellow leaf curl Sardinia virus (isolate Spain-1) (TYLCSV) protein is Transcriptional activator protein.